Here is a 147-residue protein sequence, read N- to C-terminus: MKILVDADSCPVKDIVFQVAREYSVKVVVVKDLSHEIDSNYAEVITADQGRDSVDLIIVNNTDKGDIVITQDYGLASLALTKQAIVLHPNGWKFTEENIDGLLLNRHINQQIRQRNGRHTKTPKRKSKDDNNFKNLLKEIIVQMKSS.

This sequence belongs to the UPF0178 family.

This Natranaerobius thermophilus (strain ATCC BAA-1301 / DSM 18059 / JW/NM-WN-LF) protein is UPF0178 protein Nther_1836.